The sequence spans 268 residues: Indole-3-glycerol phosphate synthase (268 aa).

This sequence belongs to the TrpC family.

The enzyme catalyses 1-(2-carboxyphenylamino)-1-deoxy-D-ribulose 5-phosphate + H(+) = (1S,2R)-1-C-(indol-3-yl)glycerol 3-phosphate + CO2 + H2O. It functions in the pathway amino-acid biosynthesis; L-tryptophan biosynthesis; L-tryptophan from chorismate: step 4/5. This is Indole-3-glycerol phosphate synthase from Lachnospira eligens (strain ATCC 27750 / DSM 3376 / VPI C15-48 / C15-B4) (Eubacterium eligens).